Consider the following 338-residue polypeptide: Fructose-1,6-bisphosphatase class 1 (338 aa).

Mg(2+) is bound by residues Glu-90, Asp-112, Leu-114, and Asp-115. Residues 115–118 (DGSS), Asn-207, and Lys-273 contribute to the substrate site. Glu-279 serves as a coordination point for Mg(2+).

This sequence belongs to the FBPase class 1 family. As to quaternary structure, homotetramer. Mg(2+) serves as cofactor.

The protein resides in the cytoplasm. The catalysed reaction is beta-D-fructose 1,6-bisphosphate + H2O = beta-D-fructose 6-phosphate + phosphate. Its pathway is carbohydrate biosynthesis; gluconeogenesis. The polypeptide is Fructose-1,6-bisphosphatase class 1 (Stenotrophomonas maltophilia (strain R551-3)).